The chain runs to 517 residues: Zinc finger protein 215 (517 aa).

In terms of domain architecture, SCAN box spans R48–V126. Residues V164 to F237 enclose the KRAB domain. 4 consecutive C2H2-type zinc fingers follow at residues Y379–H401, Y407–H429, Y462–H484, and F490–H512.

This sequence belongs to the krueppel C2H2-type zinc-finger protein family.

The protein resides in the nucleus. Functionally, may be involved in transcriptional regulation. The sequence is that of Zinc finger protein 215 (ZNF215) from Pongo abelii (Sumatran orangutan).